A 473-amino-acid polypeptide reads, in one-letter code: Photosystem II CP43 reaction center protein (473 aa).

A propeptide spanning residues Met-1–Glu-14 is cleaved from the precursor. N-acetylthreonine is present on Thr-15. Thr-15 carries the post-translational modification Phosphothreonine. 5 helical membrane-spanning segments follow: residues Leu-69–Ala-93, Leu-134–Ser-155, Lys-178–Thr-200, Lys-255–Ser-275, and Trp-291–Ala-312. Glu-367 is a [CaMn4O5] cluster binding site. Residues Arg-447–Pro-471 traverse the membrane as a helical segment.

Belongs to the PsbB/PsbC family. PsbC subfamily. In terms of assembly, PSII is composed of 1 copy each of membrane proteins PsbA, PsbB, PsbC, PsbD, PsbE, PsbF, PsbH, PsbI, PsbJ, PsbK, PsbL, PsbM, PsbT, PsbX, PsbY, PsbZ, Psb30/Ycf12, at least 3 peripheral proteins of the oxygen-evolving complex and a large number of cofactors. It forms dimeric complexes. Requires Binds multiple chlorophylls and provides some of the ligands for the Ca-4Mn-5O cluster of the oxygen-evolving complex. It may also provide a ligand for a Cl- that is required for oxygen evolution. PSII binds additional chlorophylls, carotenoids and specific lipids. as cofactor.

It is found in the plastid. Its subcellular location is the chloroplast thylakoid membrane. In terms of biological role, one of the components of the core complex of photosystem II (PSII). It binds chlorophyll and helps catalyze the primary light-induced photochemical processes of PSII. PSII is a light-driven water:plastoquinone oxidoreductase, using light energy to abstract electrons from H(2)O, generating O(2) and a proton gradient subsequently used for ATP formation. The chain is Photosystem II CP43 reaction center protein from Cycas taitungensis (Prince sago).